We begin with the raw amino-acid sequence, 439 residues long: (p)ppApp synthetase toxin Tas1 (439 aa).

The protein resides in the secreted. The enzyme catalyses AMP + ATP = adenosine 3'-diphosphate,5'-phosphate + AMP + H(+). It carries out the reaction ADP + ATP = adenosine 3'-diphosphate,5'-diphosphate + AMP. It catalyses the reaction 2 ATP = adenosine 3'-diphosphate,5'-triphosphate + AMP. Functionally, type VI secretion exported toxin that pyrophosphorylates adenosine nucleotides to produce (p)ppApp. Thereby, depletes cellular ADP and ATP to dysregulate central metabolism in competitor cells. The protein is (p)ppApp synthetase toxin Tas1 (tas1) of Pseudomonas aeruginosa (strain UCBPP-PA14).